Here is a 1117-residue protein sequence, read N- to C-terminus: Protein rliB (1117 aa).

The N-terminal stretch at 1-23 (MKNINNKILKIFILFLAICSVKS) is a signal peptide. 4 N-linked (GlcNAc...) asparagine glycosylation sites follow: Asn-136, Asn-195, Asn-279, and Asn-318. The 127-residue stretch at 266-392 (STWSNNLVPQ…YHNSWTKLAS (127 aa)) folds into the G8 domain. PbH1 repeat units follow at residues 522–544 (VQKS…TIHG) and 545–567 (TNNL…YLED). 2 N-linked (GlcNAc...) asparagine glycosylation sites follow: Asn-547 and Asn-605. The stretch at 621–642 (NAYNTIIGNSASGGWAGFSFPN) is one PbH1 3 repeat. N-linked (GlcNAc...) asparagine glycans are attached at residues Asn-728, Asn-845, Asn-1030, Asn-1044, Asn-1091, and Asn-1107.

Belongs to the comF family.

It localises to the secreted. This Dictyostelium discoideum (Social amoeba) protein is Protein rliB (rliB).